We begin with the raw amino-acid sequence, 325 residues long: Hydroxymethylglutaryl-CoA lyase, mitochondrial (325 aa).

Residues M1–G27 constitute a mitochondrion transit peptide. Residues V33–L300 enclose the Pyruvate carboxyltransferase domain. R41 is a binding site for substrate. D42 is an a divalent metal cation binding site. Residue K48 is modified to N6-acetyllysine; alternate. Residue K48 is modified to N6-succinyllysine; alternate. At K111 the chain carries N6-acetyllysine. K137 and K179 each carry N6-acetyllysine; alternate. 2 positions are modified to N6-succinyllysine; alternate: K137 and K179. Residues H233 and H235 each contribute to the a divalent metal cation site. Residue C266 is part of the active site. Residue N275 participates in a divalent metal cation binding. The Microbody targeting signal signature appears at C323–L325. K324 is modified (N6-acetyllysine).

Belongs to the HMG-CoA lyase family. In terms of assembly, homodimer; disulfide-linked. Can also form homotetramers. In terms of tissue distribution, in suckling rat, highest levels in liver and in intestine. Lower levels in heart, kidney and cerebellum. Weak expression in brain cortex, medulla and midbrain. Levels decrease slightly during weaning.

It localises to the mitochondrion matrix. It is found in the peroxisome. The catalysed reaction is (3S)-3-hydroxy-3-methylglutaryl-CoA = acetoacetate + acetyl-CoA. It participates in metabolic intermediate metabolism; (S)-3-hydroxy-3-methylglutaryl-CoA degradation; acetoacetate from (S)-3-hydroxy-3-methylglutaryl-CoA: step 1/1. Functionally, mitochondrial 3-hydroxy-3-methylglutaryl-CoA lyase that catalyzes a cation-dependent cleavage of (S)-3-hydroxy-3-methylglutaryl-CoA into acetyl-CoA and acetoacetate, a key step in ketogenesis. Terminal step in leucine catabolism. Ketone bodies (beta-hydroxybutyrate, acetoacetate and acetone) are essential as an alternative source of energy to glucose, as lipid precursors and as regulators of metabolism. The protein is Hydroxymethylglutaryl-CoA lyase, mitochondrial (Hmgcl) of Rattus norvegicus (Rat).